Here is a 381-residue protein sequence, read N- to C-terminus: Creatine kinase B-type (381 aa).

At Ser4 the chain carries Phosphoserine. A Phosphagen kinase N-terminal domain is found at 11–98; it reads KLRFPAEDEF…FDPIIEDRHG (88 aa). A Phosphothreonine modification is found at Thr35. A Glycyl lysine isopeptide (Lys-Gly) (interchain with G-Cter in ubiquitin) cross-link involves residue Lys45. Val72 is a binding site for creatine. Residues 96–110 are compositionally biased toward basic and acidic residues; the sequence is RHGGYQPSDEHKTDL. The segment at 96 to 122 is disordered; sequence RHGGYQPSDEHKTDLNPDNLQGGDDLD. Lys107 participates in a covalent cross-link: Glycyl lysine isopeptide (Lys-Gly) (interchain with G-Cter in ubiquitin). At Tyr125 the chain carries Phosphotyrosine. Positions 125–367 constitute a Phosphagen kinase C-terminal domain; it reads YVLSSRVRTG…KLLIEMEQRL (243 aa). ATP-binding positions include 128–132, Arg130, Arg132, and His191; that span reads SSRVR. The segment at 130 to 138 is internal MTS-like signal; the sequence is RVRTGRSIR. The residue at position 199 (Ser199) is a Phosphoserine. Glu232 serves as a coordination point for creatine. Arg236 lines the ATP pocket. Tyr269 carries the 3'-nitrotyrosine modification. Residue Ser285 coordinates creatine. Arg292 serves as a coordination point for ATP. Ser309 carries the phosphoserine modification. Residues Arg320, 320 to 325, and Asp335 contribute to the ATP site; that span reads RGTGGV. Position 322 is a phosphothreonine (Thr322). Lys381 is covalently cross-linked (Glycyl lysine isopeptide (Lys-Gly) (interchain with G-Cter in ubiquitin)).

This sequence belongs to the ATP:guanido phosphotransferase family. In terms of assembly, dimer of identical or non-identical chains, which can be either B (brain type) or M (muscle type). With MM being the major form in skeletal muscle and myocardium, MB existing in myocardium, and BB existing in many tissues, especially brain. Interacts with SLC12A6 (via C-terminus); the interaction may be required for SLC12A6 potassium-chloride cotransport activity. Ubiquitinated by the ECS(ASB9) complex, leading to its degradation by the proteasome. In the kidney localized primarily in the outer medulla in the thick ascending limb and distal convoluted tubule.

Its subcellular location is the cytoplasm. It is found in the cytosol. It localises to the mitochondrion. The protein resides in the cell membrane. It carries out the reaction creatine + ATP = N-phosphocreatine + ADP + H(+). Its function is as follows. Reversibly catalyzes the transfer of phosphate between ATP and various phosphogens (e.g. creatine phosphate). Creatine kinase isoenzymes play a central role in energy transduction in tissues with large, fluctuating energy demands, such as skeletal muscle, heart, brain and spermatozoa. Acts as a key regulator of adaptive thermogenesis as part of the futile creatine cycle: localizes to the mitochondria of thermogenic fat cells and acts by mediating phosphorylation of creatine to initiate a futile cycle of creatine phosphorylation and dephosphorylation. During the futile creatine cycle, creatine and N-phosphocreatine are in a futile cycle, which dissipates the high energy charge of N-phosphocreatine as heat without performing any mechanical or chemical work. This is Creatine kinase B-type (Ckb) from Rattus norvegicus (Rat).